A 261-amino-acid polypeptide reads, in one-letter code: Thiazole synthase (261 aa).

Lysine 101 serves as the catalytic Schiff-base intermediate with DXP. 1-deoxy-D-xylulose 5-phosphate is bound by residues glycine 162, 188–189 (AG), and 210–211 (NT).

Belongs to the ThiG family. As to quaternary structure, homotetramer. Forms heterodimers with either ThiH or ThiS.

The protein localises to the cytoplasm. It catalyses the reaction [ThiS sulfur-carrier protein]-C-terminal-Gly-aminoethanethioate + 2-iminoacetate + 1-deoxy-D-xylulose 5-phosphate = [ThiS sulfur-carrier protein]-C-terminal Gly-Gly + 2-[(2R,5Z)-2-carboxy-4-methylthiazol-5(2H)-ylidene]ethyl phosphate + 2 H2O + H(+). It participates in cofactor biosynthesis; thiamine diphosphate biosynthesis. Its function is as follows. Catalyzes the rearrangement of 1-deoxy-D-xylulose 5-phosphate (DXP) to produce the thiazole phosphate moiety of thiamine. Sulfur is provided by the thiocarboxylate moiety of the carrier protein ThiS. In vitro, sulfur can be provided by H(2)S. This Aromatoleum aromaticum (strain DSM 19018 / LMG 30748 / EbN1) (Azoarcus sp. (strain EbN1)) protein is Thiazole synthase.